Reading from the N-terminus, the 547-residue chain is Chaperonin GroEL (547 aa).

Residues 30–33 (TLGP), Lys-51, 87–91 (DGTTT), Gly-415, and Asp-495 contribute to the ATP site.

This sequence belongs to the chaperonin (HSP60) family. As to quaternary structure, forms a cylinder of 14 subunits composed of two heptameric rings stacked back-to-back. Interacts with the co-chaperonin GroES.

Its subcellular location is the cytoplasm. It catalyses the reaction ATP + H2O + a folded polypeptide = ADP + phosphate + an unfolded polypeptide.. In terms of biological role, together with its co-chaperonin GroES, plays an essential role in assisting protein folding. The GroEL-GroES system forms a nano-cage that allows encapsulation of the non-native substrate proteins and provides a physical environment optimized to promote and accelerate protein folding. The sequence is that of Chaperonin GroEL from Shewanella halifaxensis (strain HAW-EB4).